The primary structure comprises 364 residues: Fructose-bisphosphate aldolase A (364 aa).

Residue tyrosine 5 is modified to Phosphotyrosine. Threonine 9 is subject to Phosphothreonine. Phosphoserine occurs at positions 36 and 39. N6-acetyllysine; alternate is present on lysine 42. Residue lysine 42 forms a Glycyl lysine isopeptide (Lys-Gly) (interchain with G-Cter in SUMO1); alternate linkage. Lysine 42 participates in a covalent cross-link: Glycyl lysine isopeptide (Lys-Gly) (interchain with G-Cter in SUMO2); alternate. Position 43 (arginine 43) interacts with beta-D-fructose 1,6-bisphosphate. Phosphoserine is present on serine 46. Residue lysine 99 is modified to N6-(2-hydroxyisobutyryl)lysine. Lysine 108 carries the N6-acetyllysine modification. Lysine 111 is modified (N6-acetyllysine; alternate). N6-malonyllysine; alternate is present on lysine 111. Serine 132 carries the post-translational modification Phosphoserine. Lysine 147 carries the post-translational modification N6-(2-hydroxyisobutyryl)lysine. Glutamate 188 serves as the catalytic Proton acceptor. Lysine 230 serves as the catalytic Schiff-base intermediate with dihydroxyacetone-P. A Phosphoserine modification is found at serine 272. Beta-D-fructose 1,6-bisphosphate contacts are provided by residues 272–274, serine 301, and arginine 304; that span reads SGG. N6-malonyllysine is present on lysine 312. Lysine 330 carries the N6-acetyllysine modification.

The protein belongs to the class I fructose-bisphosphate aldolase family. Homotetramer. Interacts with SNX9 and WAS. Interacts with FBP2; the interaction blocks FBP2 inhibition by physiological concentrations of AMP and reduces inhibition by Ca(2+).

The protein resides in the cytoplasm. It localises to the myofibril. It is found in the sarcomere. Its subcellular location is the i band. The protein localises to the m line. It catalyses the reaction beta-D-fructose 1,6-bisphosphate = D-glyceraldehyde 3-phosphate + dihydroxyacetone phosphate. The protein operates within carbohydrate degradation; glycolysis; D-glyceraldehyde 3-phosphate and glycerone phosphate from D-glucose: step 4/4. Catalyzes the reversible conversion of beta-D-fructose 1,6-bisphosphate (FBP) into two triose phosphate and plays a key role in glycolysis and gluconeogenesis. In addition, may also function as scaffolding protein. The protein is Fructose-bisphosphate aldolase A (Aldoa) of Mus musculus (Mouse).